Here is a 700-residue protein sequence, read N- to C-terminus: Stonustoxin subunit beta (700 aa).

Positions 2–264 (PSDILVVAAL…EAPQLMADSS (263 aa)) are structural MACPF/CDC pore-forming domain. The structural FAT domain stretch occupies residues 265–384 (TPILRKVRNT…DILTKAKPKV (120 aa)). A thioredoxin (THX) domain region spans residues 385–514 (IFNQGVLFKG…PYMPGVESIK (130 aa)). Residues 506–700 (YMPGVESIKD…QKVNGQIKLL (195 aa)) form the B30.2/SPRY domain.

Belongs to the SNTX/VTX toxin family. In terms of assembly, heterodimer of alpha and beta subunits; non-covalently linked. Intrachain disulfide bonds may be present in the heterodimer. In terms of processing, not glycosylated. In terms of tissue distribution, expressed by the venom gland.

It is found in the secreted. Its function is as follows. This lethal (towards mammals) heterodimer induces hemolytic activities due to its ability to form pores in the cell membrane. The pore may be composed of 10 SNTX-alpha/beta heterodimers. The toxin elicits potent hypotension which is endothelium-dependent and appears to be mediated by the nitric oxide pathway and activation of potassium channels. In addition, it displays edema-inducing activities, increases vascular permeability. It also shows myotoxic activities and interferes irreversibly with neuromuscular function. It also induces irreversible platelet aggregation in rabbit or rat but not in human or mouse whole blood. In addition, it has been observed to increase spontaneous quantal acetylcholine release from isolated frog cutaneous pectoris motor endings. The protein is Stonustoxin subunit beta of Synanceia horrida (Estuarine stonefish).